The sequence spans 386 residues: Cobalt-precorrin-5B C(1)-methyltransferase (386 aa).

Belongs to the CbiD family.

The enzyme catalyses Co-precorrin-5B + S-adenosyl-L-methionine = Co-precorrin-6A + S-adenosyl-L-homocysteine. The protein operates within cofactor biosynthesis; adenosylcobalamin biosynthesis; cob(II)yrinate a,c-diamide from sirohydrochlorin (anaerobic route): step 6/10. Functionally, catalyzes the methylation of C-1 in cobalt-precorrin-5B to form cobalt-precorrin-6A. The protein is Cobalt-precorrin-5B C(1)-methyltransferase of Prochlorococcus marinus (strain MIT 9303).